A 1400-amino-acid chain; its full sequence is Tensin-2 (1400 aa).

The segment at 31 to 79 (PHSFREKVFRKKTPVCAVCKVTIDGTGVSCRVCKVATHRKCEAKVTSSC) adopts a Phorbol-ester/DAG-type zinc-finger fold. The residue at position 91 (T91) is a Phosphothreonine. Residues S118 and S120 each carry the phosphoserine modification. A Phosphatase tensin-type domain is found at 122 to 294 (DPLMERRWDL…SYFSGLLSGS (173 aa)). C231 functions as the Phosphocysteine intermediate in the catalytic mechanism. Residues 299-425 (SSPLFLHYVF…ASVEFVFSSS (127 aa)) enclose the C2 tensin-type domain. The tract at residues 425 to 444 (SPEKVKGNTPRNDPSVSVDY) is disordered. A compositionally biased stretch (polar residues) spans 433–444 (TPRNDPSVSVDY). At S455 the chain carries Phosphoserine. Y456 bears the Phosphotyrosine mark. Residue S466 is modified to Phosphoserine. Phosphothreonine is present on T474. A Phosphoserine modification is found at S481. Y483 is subject to Phosphotyrosine. The disordered stretch occupies residues 488-536 (RVPRQTPPAPSPELPPPPMLSVSSDSGHSSTLTTEHTAESPGRPPPTAA). Residues 492–506 (QTPPAPSPELPPPPM) are compositionally biased toward pro residues. Omega-N-methylarginine is present on R555. A disordered region spans residues 809-1114 (CGSPSEGRGY…DVTQPPEHPL (306 aa)). A phosphoserine mark is found at S820, S825, S830, S832, and S835. Composition is skewed to polar residues over residues 898-917 (CSAS…SSPV) and 929-940 (TRSPSLAPTQRL). A Phosphothreonine modification is found at T909. Phosphoserine occurs at positions 931, 941, and 972. T977 carries the post-translational modification Phosphothreonine. A phosphoserine mark is found at S991 and S1003. Positions 1046-1056 (PEPPQSSPTPA) are enriched in pro residues. The segment covering 1082-1098 (SGQQPSPPARSTNQHVT) has biased composition (polar residues). S1087 carries the post-translational modification Phosphoserine. Positions 1131 to 1238 (WYKPHLSRDQ…SLPCCLRIPS (108 aa)) constitute an SH2 domain. At T1173 the chain carries Phosphothreonine. S1238 is subject to Phosphoserine. In terms of domain architecture, PTB spans 1266–1399 (ACSVLYLTSV…FITKVLLGQR (134 aa)).

Belongs to the PTEN phosphatase protein family. As to quaternary structure, interacts with AXL. Interacts with SYK; leading to its phosphorylation. Interacts with SQSTM1 (via PB1 domain); the interaction leads to sequestration of TNS2 in cytoplasmic aggregates with SQSTM1 and promotes TNS2 ubiquitination and proteasomal degradation. Post-translationally, ubiquitinated following sequestration in cytoplasmic aggregates with SQSTM1, leading to proteasomal degradation. As to expression, in the adult kidney, expressed mainly in glomeruli (at protein level). In the newborn kidney, localizes on the basal surface of podocytes along the glomerular basement membrane and not in endothelial cells. Low expression levels in anabolic skeletal muscles.

The protein resides in the cell junction. The protein localises to the focal adhesion. It is found in the cell membrane. Its subcellular location is the cytoplasm. The enzyme catalyses O-phospho-L-tyrosyl-[protein] + H2O = L-tyrosyl-[protein] + phosphate. In terms of biological role, tyrosine-protein phosphatase which regulates cell motility, proliferation and muscle-response to insulin. Phosphatase activity is mediated by binding to phosphatidylinositol-3,4,5-triphosphate (PtdIns(3,4,5)P3) via the SH2 domain. In muscles and under catabolic conditions, dephosphorylates IRS1 leading to its degradation and muscle atrophy. Negatively regulates PI3K-AKT pathway activation. Dephosphorylates nephrin NPHS1 in podocytes which affects mTORC1 complex activity. Under normal glucose conditions, NPHS1 outcompetes IRS1 for binding to phosphatidylinositol 3-kinase (PI3K) which balances mTORC1 activity but high glucose conditions lead to up-regulation of TNS2, increased NPHS1 dephosphorylation and activation of mTORC1, contributing to podocyte hypertrophy and proteinuria. Required for correct podocyte morphology, podocyte-glomerular basement membrane interaction and integrity of the glomerular filtration barrier. Enhances RHOA activation in the presence of DLC1. Plays a role in promoting DLC1-dependent remodeling of the extracellular matrix. This chain is Tensin-2 (Tns2), found in Mus musculus (Mouse).